The sequence spans 490 residues: Pyridine nucleotide-disulfide oxidoreductase domain-containing protein 1 (490 aa).

The protein belongs to the class-I pyridine nucleotide-disulfide oxidoreductase family. PYROXD1 subfamily. It depends on FAD as a cofactor.

Its subcellular location is the nucleus. It localises to the cytoplasm. The protein localises to the myofibril. The protein resides in the sarcomere. In terms of biological role, probable FAD-dependent oxidoreductase; involved in the cellular oxidative stress response. Required for normal sarcomere structure and muscle fiber integrity. This Danio rerio (Zebrafish) protein is Pyridine nucleotide-disulfide oxidoreductase domain-containing protein 1 (pyroxd1).